Consider the following 350-residue polypeptide: Putative transport protein YdbI (350 aa).

The next 8 helical transmembrane spans lie at 18–38 (IFVV…LILL), 67–87 (VVIT…GFVF), 145–165 (ISTF…FLFE), 207–227 (FIIA…MHFP), 229–249 (LFGL…GVVI), 257–277 (IAYS…IFAI), 289–309 (LMSA…IFSE), and 311–331 (FFGI…LDIL).

The protein belongs to the autoinducer-2 exporter (AI-2E) (TC 2.A.86) family.

It is found in the cell membrane. This Bacillus subtilis (strain 168) protein is Putative transport protein YdbI (ydbI).